The following is a 689-amino-acid chain: Glycine--tRNA ligase beta subunit (689 aa).

Belongs to the class-II aminoacyl-tRNA synthetase family. As to quaternary structure, tetramer of two alpha and two beta subunits.

It localises to the cytoplasm. It catalyses the reaction tRNA(Gly) + glycine + ATP = glycyl-tRNA(Gly) + AMP + diphosphate. The chain is Glycine--tRNA ligase beta subunit from Actinobacillus pleuropneumoniae serotype 3 (strain JL03).